Consider the following 408-residue polypeptide: GTPase Obg (408 aa).

The Obg domain maps to 1 to 159 (MKFVDEVSIR…RDLKMEMKVL (159 aa)). Residues 127–148 (NTRFKSSTNRAPRQTTPGKPGE) are disordered. Residues 129–143 (RFKSSTNRAPRQTTP) show a composition bias toward polar residues. The OBG-type G domain occupies 160–333 (ADVGLLGLPN…LSHDLMRYLE (174 aa)). Residues 166-173 (GLPNAGKS), 191-195 (FTTLV), 213-216 (DIPG), 283-286 (NKAD), and 314-316 (SAI) contribute to the GTP site. Mg(2+) contacts are provided by serine 173 and threonine 193. Residues 385–401 (GDDDGWDDDFEDDEDGP) show a composition bias toward acidic residues. The interval 385-408 (GDDDGWDDDFEDDEDGPEIIYVRD) is disordered.

The protein belongs to the TRAFAC class OBG-HflX-like GTPase superfamily. OBG GTPase family. As to quaternary structure, monomer. Mg(2+) is required as a cofactor.

The protein resides in the cytoplasm. In terms of biological role, an essential GTPase which binds GTP, GDP and possibly (p)ppGpp with moderate affinity, with high nucleotide exchange rates and a fairly low GTP hydrolysis rate. Plays a role in control of the cell cycle, stress response, ribosome biogenesis and in those bacteria that undergo differentiation, in morphogenesis control. This Pseudomonas putida (strain ATCC 700007 / DSM 6899 / JCM 31910 / BCRC 17059 / LMG 24140 / F1) protein is GTPase Obg.